The sequence spans 281 residues: Energy-coupling factor transporter ATP-binding protein EcfA1 (281 aa).

The ABC transporter domain maps to 7-242 (IAAEDITFRY…NQDLIKIGLD (236 aa)). ATP is bound at residue 42–49 (GHNGSGKS).

The protein belongs to the ABC transporter superfamily. Energy-coupling factor EcfA family. In terms of assembly, forms a stable energy-coupling factor (ECF) transporter complex composed of 2 membrane-embedded substrate-binding proteins (S component), 2 ATP-binding proteins (A component) and 2 transmembrane proteins (T component).

It is found in the cell membrane. Its function is as follows. ATP-binding (A) component of a common energy-coupling factor (ECF) ABC-transporter complex. Unlike classic ABC transporters this ECF transporter provides the energy necessary to transport a number of different substrates. This Bacillus licheniformis (strain ATCC 14580 / DSM 13 / JCM 2505 / CCUG 7422 / NBRC 12200 / NCIMB 9375 / NCTC 10341 / NRRL NRS-1264 / Gibson 46) protein is Energy-coupling factor transporter ATP-binding protein EcfA1.